Consider the following 224-residue polypeptide: Peroxiredoxin-6 (224 aa).

In terms of domain architecture, Thioredoxin spans 5-169; it reads LLLGDEAPNF…ILRVIISLQL (165 aa). The required and sufficient for targeting to lysosomes and lamellar bodies stretch occupies residues 31–40; the sequence is DSWGILFSHP. T44 carries the post-translational modification Phosphothreonine. C47 serves as the catalytic Cysteine sulfenic acid (-SOH) intermediate; for peroxidase activity. N6-acetyllysine is present on K63. Position 89 is a phosphotyrosine (Y89). D140 serves as the catalytic For phospholipase activity. The residue at position 177 (T177) is a Phosphothreonine; by MAPK. At K209 the chain carries N6-acetyllysine; alternate. Position 209 is an N6-succinyllysine; alternate (K209).

This sequence belongs to the peroxiredoxin family. Prx6 subfamily. Homodimer. Interacts with GSTP1; mediates PRDX6 glutathionylation and regeneration. Interacts with APEX1. Interacts with STH. May interact with FAM168B. May interact with HTR2A. Does not need Ca(2+) as cofactor. is required as a cofactor. Post-translationally, irreversibly inactivated by overoxidation of Cys-47 to sulfinic acid (Cys-SO(2)H) and sulfonic acid (Cys-SO(3)H) forms upon oxidative stress. Phosphorylation at Thr-177 by MAP kinases increases the phospholipase activity of the enzyme. The phosphorylated form exhibits a greater lysophosphatidylcholine acyltransferase activity compared to the non-phosphorylated form.

It localises to the cytoplasm. The protein localises to the lysosome. The enzyme catalyses a hydroperoxide + 2 glutathione = an alcohol + glutathione disulfide + H2O. It catalyses the reaction a 1,2-diacyl-sn-glycero-3-phosphocholine + H2O = a 1-acyl-sn-glycero-3-phosphocholine + a fatty acid + H(+). The catalysed reaction is a 1-acyl-sn-glycero-3-phosphocholine + an acyl-CoA = a 1,2-diacyl-sn-glycero-3-phosphocholine + CoA. It carries out the reaction 1-hexadecanoyl-sn-glycero-3-phosphocholine + hexadecanoyl-CoA = 1,2-dihexadecanoyl-sn-glycero-3-phosphocholine + CoA. The enzyme catalyses 1,2-dihexadecanoyl-sn-glycero-3-phosphocholine + H2O = 1-hexadecanoyl-sn-glycero-3-phosphocholine + hexadecanoate + H(+). In terms of biological role, thiol-specific peroxidase that catalyzes the reduction of hydrogen peroxide and organic hydroperoxides to water and alcohols, respectively. Can reduce H(2)O(2) and short chain organic, fatty acid, and phospholipid hydroperoxides. Also has phospholipase activity, and can therefore either reduce the oxidized sn-2 fatty acyl group of phospholipids (peroxidase activity) or hydrolyze the sn-2 ester bond of phospholipids (phospholipase activity). These activities are dependent on binding to phospholipids at acidic pH and to oxidized phospholipds at cytosolic pH. Plays a role in cell protection against oxidative stress by detoxifying peroxides and in phospholipid homeostasis. Exhibits acyl-CoA-dependent lysophospholipid acyltransferase which mediates the conversion of lysophosphatidylcholine (1-acyl-sn-glycero-3-phosphocholine or LPC) into phosphatidylcholine (1,2-diacyl-sn-glycero-3-phosphocholine or PC). Shows a clear preference for LPC as the lysophospholipid and for palmitoyl CoA as the fatty acyl substrate. This is Peroxiredoxin-6 (PRDX6) from Bos taurus (Bovine).